Here is a 259-residue protein sequence, read N- to C-terminus: uncharacterized protein (259 aa).

Positions Leu-171–Phe-259 are disordered. Residues Ser-179–Thr-201 show a composition bias toward polar residues. A compositionally biased stretch (basic residues) spans Arg-202–Asn-211. Polar residues predominate over residues Tyr-212–Tyr-236.

It is found in the virion. This is an uncharacterized protein from Acanthamoeba polyphaga (Amoeba).